The primary structure comprises 188 residues: Inner kinetochore subunit cnl2 (188 aa).

The protein belongs to the NKP2 family. In terms of assembly, component of the inner kinetochore constitutive centromere-associated network (CCAN) (also known as central kinetochore Sim4 complex in fission yeast), which is composed of at least cnl2, cnp3, cnp20, fta1, fta2, fta3, fta4, fta6, fta7, mal2, mhf1, mhf2, mis6, mis15, mis17, sim4 and wip1.

The protein localises to the cytoplasm. It localises to the nucleus. The protein resides in the chromosome. It is found in the centromere. Its subcellular location is the kinetochore. Functionally, component of the kinetochore, a multiprotein complex that assembles on centromeric DNA and attaches chromosomes to spindle microtubules, mediating chromosome segregation and sister chromatid segregation during meiosis and mitosis. Component of the inner kinetochore constitutive centromere-associated network (CCAN), which serves as a structural platform for outer kinetochore assembly. This chain is Inner kinetochore subunit cnl2 (cnl2), found in Schizosaccharomyces pombe (strain 972 / ATCC 24843) (Fission yeast).